Consider the following 406-residue polypeptide: MSATIEREFEELDAQCRWQPLYLEIRNESHDYPHRVAKFPENRNRNRYRDVSPYDHSRVKLQSTENDYINASLVDIEEAQRSYILTQGPLPNTCCHFWLMVWQQKTKAVVMLNRTVEKESVKCAQYWPTDDREMVFKETGFSVKLLSEDVKSYYTVHLLQLENINTGETRTISHFHYTTWPDFGVPESPASFLNFLFKVRESGCLTPDHGPAVIHCSAGIGRSGTFSLVDTCLVLMEKGEDVNVKQLLLNMRKYRMGLIQTPDQLRFSYMAIIEGAKYTKGDSNIQKRWKELSKEDLSPICDHSQNRVMVEKYNGKRIGSEDEKLTGLPSKVQDTVEESSESILRKRIREDRKATTAQKVQQMKQRLNETERKRKRWLYWQPILTKMGFVSVILVGALVGWTLLFH.

The Tyrosine-protein phosphatase domain maps to 5-275; sequence IEREFEELDA…RFSYMAIIEG (271 aa). Residue Tyr-22 is modified to Phosphotyrosine. At Ser-52 the chain carries Phosphoserine. Residue Tyr-68 is modified to Phosphotyrosine. Substrate contacts are provided by residues Asp-182, 216–222, and Gln-260; that span reads CSAGIGR. The Phosphocysteine intermediate role is filled by Cys-216. Cys-216 bears the S-nitrosocysteine mark. Residues Ser-293, Ser-298, Ser-304, Ser-320, and Ser-339 each carry the phosphoserine modification. Positions 341–406 are endoplasmic reticulum location; sequence ESILRKRIRE…ALVGWTLLFH (66 aa). Residues 371–406 are mediates interaction with STX17; it reads ERKRKRWLYWQPILTKMGFVSVILVGALVGWTLLFH.

This sequence belongs to the protein-tyrosine phosphatase family. Non-receptor class 1 subfamily. In terms of assembly, interacts with RMDN3. Isoform 1 interacts with TMED9. Isoform 1 interacts with STX17; dephosphorylates STX17. Interacts with ITGA1 (via cytoplasmic domain); activates the phosphatase activity towards EGFR. Interacts with TRAF2; probably involved in tumor necrosis factor-mediated signaling. Interacts with MET. Interacts with FAM220A and STAT3; interaction with FAM220A promotes interaction of PTPN2 with transcriptional activator STAT3, leading to dephosphorylation of STAT3 by PTPN2 and negative regulation of STAT3 transcriptional activator activity. Post-translationally, specifically phosphorylated in a cell cycle-dependent manner by cyclin-dependent kinases CDK1 and CDK2. Probably activated through phosphorylation by PKR. In terms of tissue distribution, ubiquitously expressed. The highest expression levels were found in ovary, testis, thymus and kidney.

Its subcellular location is the endoplasmic reticulum. It is found in the endoplasmic reticulum-Golgi intermediate compartment. The protein resides in the nucleus. It localises to the cytoplasm. The protein localises to the cell membrane. The catalysed reaction is O-phospho-L-tyrosyl-[protein] + H2O = L-tyrosyl-[protein] + phosphate. Its function is as follows. Non-receptor type tyrosine-specific phosphatase that dephosphorylates receptor protein tyrosine kinases including INSR, EGFR, CSF1R, PDGFR. Also dephosphorylates non-receptor protein tyrosine kinases like JAK1, JAK2, JAK3, Src family kinases, STAT1, STAT3 and STAT6 either in the nucleus or the cytoplasm. Negatively regulates numerous signaling pathways and biological processes like hematopoiesis, inflammatory response, cell proliferation and differentiation, and glucose homeostasis. Plays a multifaceted and important role in the development of the immune system. Functions in T-cell receptor signaling through dephosphorylation of FYN and LCK to control T-cells differentiation and activation. Dephosphorylates CSF1R, negatively regulating its downstream signaling and macrophage differentiation. Negatively regulates cytokine (IL2/interleukin-2 and interferon)-mediated signaling through dephosphorylation of the cytoplasmic kinases JAK1, JAK3 and their substrate STAT1, that propagate signaling downstream of the cytokine receptors. Also regulates the IL6/interleukin-6 and IL4/interleukin-4 cytokine signaling through dephosphorylation of STAT3 and STAT6 respectively. In addition to the immune system, it is involved in anchorage-dependent, negative regulation of EGF-stimulated cell growth. Activated by the integrin ITGA1/ITGB1, it dephosphorylates EGFR and negatively regulates EGF signaling. Dephosphorylates PDGFRB and negatively regulates platelet-derived growth factor receptor-beta signaling pathway and therefore cell proliferation. Negatively regulates tumor necrosis factor-mediated signaling downstream via MAPK through SRC dephosphorylation. May also regulate the hepatocyte growth factor receptor signaling pathway through dephosphorylation of the hepatocyte growth factor receptor MET. Also plays an important role in glucose homeostasis. For instance, negatively regulates the insulin receptor signaling pathway through the dephosphorylation of INSR and control gluconeogenesis and liver glucose production through negative regulation of the IL6 signaling pathways. May also bind DNA. This Mus musculus (Mouse) protein is Tyrosine-protein phosphatase non-receptor type 2 (Ptpn2).